Reading from the N-terminus, the 1177-residue chain is Lon protease homolog, mitochondrial (1177 aa).

Disordered regions lie at residues 72 to 197 (RTNS…KSPA) and 353 to 386 (AKKA…DSST). Basic and acidic residues predominate over residues 103–150 (RGRELWVQEKDKSDKPEKSDKPDKTDKTDKDKPEKQDKDKTDKPEKTK). The segment covering 154–182 (TPSSTASTGAGEAAAPPSAPPSGSGSSSS) has biased composition (low complexity). Residues 203-505 (ILAVPISDRP…RALILLKREH (303 aa)) form the Lon N-terminal domain. A compositionally biased stretch (basic and acidic residues) spans 353–383 (AKKAKSGKTEDSKHDSKVTSKDGKETTEKYD). Position 657–664 (657–664 (GPPGVGKT)) interacts with ATP. Residues 883-916 (EKDKESAEKKTTKSKSKEVNEEPAAKEEKDKATE) show a composition bias toward basic and acidic residues. The tract at residues 883–932 (EKDKESAEKKTTKSKSKEVNEEPAAKEEKDKATESAESSETKVGTKAPPV) is disordered. The Lon proteolytic domain maps to 964–1150 (DPPPGVVMGL…QDVYDVVFQG (187 aa)). Active-site residues include S1056 and K1099.

The protein belongs to the peptidase S16 family. As to quaternary structure, homohexamer or homoheptamer. Organized in a ring with a central cavity.

Its subcellular location is the mitochondrion matrix. The enzyme catalyses Hydrolysis of proteins in presence of ATP.. In terms of biological role, ATP-dependent serine protease that mediates the selective degradation of misfolded, unassembled or oxidatively damaged polypeptides as well as certain short-lived regulatory proteins in the mitochondrial matrix. May also have a chaperone function in the assembly of inner membrane protein complexes. Participates in the regulation of mitochondrial gene expression and in the maintenance of the integrity of the mitochondrial genome. Binds to mitochondrial DNA in a site-specific manner. The sequence is that of Lon protease homolog, mitochondrial from Yarrowia lipolytica (strain CLIB 122 / E 150) (Yeast).